Consider the following 817-residue polypeptide: Myosin-A (817 aa).

The residue at position 19 (S19) is a Phosphoserine. The Myosin motor domain maps to 97-771; the sequence is MSFGDIGLLN…GAKMLSKIQR (675 aa). ATP is bound at residue 191-198; sequence GESGAGKT. The tract at residues 661 to 671 is actin-binding; the sequence is PHFIRCIKPNE. The interval 773-817 is tail; that stretch reads KLVEWENCVSVIEAAIMKYKHKQNVENNVSSLMRVQAHIRKRMVA.

The protein belongs to the TRAFAC class myosin-kinesin ATPase superfamily. Myosin family. Interacts with ACT1.

It is found in the cell membrane. Functionally, myosins are actin-based motor molecules with ATPase activity. Unconventional myosins serve in intracellular movements. Their highly divergent tails are presumed to bind to membranous compartments, which would be moved relative to actin filaments. This Plasmodium yoelii yoelii protein is Myosin-A.